We begin with the raw amino-acid sequence, 511 residues long: GMP synthase [glutamine-hydrolyzing] (511 aa).

One can recognise a Glutamine amidotransferase type-1 domain in the interval 5–195 (DILVLDFGSQ…AKYACNCESI (191 aa)). Cys82 serves as the catalytic Nucleophile. Residues His169 and Glu171 contribute to the active site. Positions 196–386 (WNMGSFAKTQ…LGLSKEVVYR (191 aa)) constitute a GMPS ATP-PPase domain. 223–229 (SGGVDSS) is an ATP binding site.

Homodimer.

The enzyme catalyses XMP + L-glutamine + ATP + H2O = GMP + L-glutamate + AMP + diphosphate + 2 H(+). It functions in the pathway purine metabolism; GMP biosynthesis; GMP from XMP (L-Gln route): step 1/1. Catalyzes the synthesis of GMP from XMP. The polypeptide is GMP synthase [glutamine-hydrolyzing] (guaA) (Campylobacter jejuni subsp. jejuni serotype O:2 (strain ATCC 700819 / NCTC 11168)).